We begin with the raw amino-acid sequence, 101 residues long: Urease subunit beta (101 aa).

This sequence belongs to the urease beta subunit family. In terms of assembly, heterotrimer of UreA (gamma), UreB (beta) and UreC (alpha) subunits. Three heterotrimers associate to form the active enzyme.

The protein resides in the cytoplasm. It catalyses the reaction urea + 2 H2O + H(+) = hydrogencarbonate + 2 NH4(+). Its pathway is nitrogen metabolism; urea degradation; CO(2) and NH(3) from urea (urease route): step 1/1. The protein is Urease subunit beta of Polaromonas naphthalenivorans (strain CJ2).